Consider the following 608-residue polypeptide: Dihydroxy-acid dehydratase, chloroplastic (608 aa).

Residues 1-34 (MQATIFSPRATLFPCKPLLPSHNVNSRRPSIISC) constitute a chloroplast transit peptide. Ser-35 is modified (N-acetylserine). Residue Cys-100 participates in [2Fe-2S] cluster binding. Asp-132 contributes to the Mg(2+) binding site. Cys-173 provides a ligand contact to [2Fe-2S] cluster. Residue Asp-174 participates in Mg(2+) binding. Residue Cys-245 coordinates [2Fe-2S] cluster. Glu-497 is a binding site for Mg(2+). The Proton acceptor role is filled by Ser-523.

This sequence belongs to the IlvD/Edd family. [2Fe-2S] cluster serves as cofactor. The cofactor is Mg(2+).

It localises to the plastid. Its subcellular location is the chloroplast. The catalysed reaction is (2R)-2,3-dihydroxy-3-methylbutanoate = 3-methyl-2-oxobutanoate + H2O. It carries out the reaction (2R,3R)-2,3-dihydroxy-3-methylpentanoate = (S)-3-methyl-2-oxopentanoate + H2O. The protein operates within amino-acid biosynthesis; L-isoleucine biosynthesis; L-isoleucine from 2-oxobutanoate: step 3/4. Its pathway is amino-acid biosynthesis; L-valine biosynthesis; L-valine from pyruvate: step 3/4. With respect to regulation, is highly competitively inhibited by the fungal sesquiterpenoid aspterric acid, which is effective as a herbicide in spray applications. Functions in the biosynthesis of branched-chain amino acids. Catalyzes the dehydration of (2R,3R)-2,3-dihydroxy-3-methylpentanoate (2,3-dihydroxy-3-methylvalerate) into 2-oxo-3-methylpentanoate (2-oxo-3-methylvalerate) and of (2R)-2,3-dihydroxy-3-methylbutanoate (2,3-dihydroxyisovalerate) into 2-oxo-3-methylbutanoate (2-oxoisovalerate), the penultimate precursor to L-isoleucine and L-valine, respectively. The sequence is that of Dihydroxy-acid dehydratase, chloroplastic from Arabidopsis thaliana (Mouse-ear cress).